Here is a 759-residue protein sequence, read N- to C-terminus: Olfactomedin-like protein 2B (759 aa).

The signal sequence occupies residues 1 to 20; that stretch reads MAKSLLLVLCFALVTTLGWG. Coiled coils occupy residues 40–68 and 179–209; these read TEDETLQNEADNQENVLSQLLGDYDKVKA and KLEEEISKNLTKENEQIREDVEEIRTEMNKR. N187 and N213 each carry an N-linked (GlcNAc...) asparagine glycan. Disordered stretches follow at residues 346 to 396 and 456 to 494; these read TRRP…VSAS and THTAPVPPPPVRTDSPGKDSTARQGTVPPGPTLSPEEED. Over residues 356–396 the composition is skewed to low complexity; sequence AAVTADAGTTSAGTPTTALPSARLPASTAAPSTPDPAVSAS. An Olfactomedin-like domain is found at 502–759; that stretch reads RCKDTLSTIT…QVTYHVIFAY (258 aa). C503 and C689 are joined by a disulfide. N-linked (GlcNAc...) asparagine glycosylation occurs at N704.

In terms of assembly, homodimer. Binds to heparin and chondroitin sulfate E. Post-translationally, O-glycosylated and N-glycosylated.

The protein resides in the secreted. This Bos taurus (Bovine) protein is Olfactomedin-like protein 2B (OLFML2B).